Reading from the N-terminus, the 542-residue chain is Glucans biosynthesis protein G (542 aa).

An N-terminal signal peptide occupies residues 1–34; the sequence is MVSLLRCPSSKPYSSLICSLTLGAVVALSGVAYA.

Belongs to the OpgD/OpgG family.

Its subcellular location is the periplasm. The protein operates within glycan metabolism; osmoregulated periplasmic glucan (OPG) biosynthesis. Functionally, involved in the biosynthesis of osmoregulated periplasmic glucans (OPGs). In Shewanella baltica (strain OS223), this protein is Glucans biosynthesis protein G.